Here is a 487-residue protein sequence, read N- to C-terminus: Protein nucleotidyltransferase YdiU (487 aa).

ATP is bound by residues Gly-90, Gly-92, Arg-93, Lys-113, Asp-125, Gly-126, Arg-176, and Arg-183. The active-site Proton acceptor is the Asp-252. The Mg(2+) site is built by Asn-253 and Asp-262. An ATP-binding site is contributed by Asp-262.

It belongs to the SELO family. Mg(2+) is required as a cofactor. Requires Mn(2+) as cofactor.

It catalyses the reaction L-seryl-[protein] + ATP = 3-O-(5'-adenylyl)-L-seryl-[protein] + diphosphate. The enzyme catalyses L-threonyl-[protein] + ATP = 3-O-(5'-adenylyl)-L-threonyl-[protein] + diphosphate. It carries out the reaction L-tyrosyl-[protein] + ATP = O-(5'-adenylyl)-L-tyrosyl-[protein] + diphosphate. The catalysed reaction is L-histidyl-[protein] + UTP = N(tele)-(5'-uridylyl)-L-histidyl-[protein] + diphosphate. It catalyses the reaction L-seryl-[protein] + UTP = O-(5'-uridylyl)-L-seryl-[protein] + diphosphate. The enzyme catalyses L-tyrosyl-[protein] + UTP = O-(5'-uridylyl)-L-tyrosyl-[protein] + diphosphate. Its function is as follows. Nucleotidyltransferase involved in the post-translational modification of proteins. It can catalyze the addition of adenosine monophosphate (AMP) or uridine monophosphate (UMP) to a protein, resulting in modifications known as AMPylation and UMPylation. The protein is Protein nucleotidyltransferase YdiU of Pseudomonas savastanoi pv. phaseolicola (strain 1448A / Race 6) (Pseudomonas syringae pv. phaseolicola (strain 1448A / Race 6)).